Consider the following 550-residue polypeptide: ATP-dependent RNA helicase MSS116, mitochondrial (550 aa).

The span at M1–N11 shows a compositional bias: basic residues. A mitochondrion-targeting transit peptide spans M1–P41. Residues M1–E51 form a disordered region. Residues F71 to Q99 carry the Q motif motif. Residues T103–H285 form the Helicase ATP-binding domain. A116–T123 lines the ATP pocket. The DEAD box motif lies at D230–D233. Residues A316–T472 enclose the Helicase C-terminal domain.

Belongs to the DEAD box helicase family. DDX18/HAS1 subfamily.

It localises to the mitochondrion matrix. It catalyses the reaction ATP + H2O = ADP + phosphate + H(+). ATP-dependent RNA helicase required for mitochondrial splicing of group I and II introns. Also required for efficient mitochondrial translation. This Phaeosphaeria nodorum (strain SN15 / ATCC MYA-4574 / FGSC 10173) (Glume blotch fungus) protein is ATP-dependent RNA helicase MSS116, mitochondrial (MSS116).